Consider the following 948-residue polypeptide: MSSLEDIKNETVDLEKIPIEEVFQQLKCSREGLTTQEGEDRIQIFGPNKLEEKKESKLLKFLGFMWNPLSWVMEMAAIMAIALANGDGRPPDWQDFVGIICLLVINSTISFIEENNAGNAAAALMAGLAPKTKVLRDGKWSEQEAAILVPGDIVSIKLGDIIPADARLLEGDPLKVDQSALTGESLPVTKHPGQEVFSGSTCKQGEIEAVVIATGVHTFFGKAAHLVDSTNQVGHFQKVLTAIGNFCICSIAIGMVIEIIVMYPIQRRKYRDGIDNLLVLLIGGIPIAMPTVLSVTMAIGSHRLSQQGAITKRMTAIEEMAGMDVLCSDKTGTLTLNKLSVDKNLVEVFCKGVEKDQVLLFAAMASRVENQDAIDAAMVGMLADPKEARAGIREVHFLPFNPVDKRTALTYIDGSGNWHRVSKGAPEQILELAKASNDLSKKVLSIIDKYAERGLRSLAVARQVVPEKTKESPGAPWEFVGLLPLFDPPRHDSAETIRRALNLGVNVKMITGDQLAIGKETGRRLGMGTNMYPSSALLGTHKDANLASIPVEELIEKADGFAGVFPEHKYEIVKKLQERKHIVGMTGDGVNDAPALKKADIGIAVADATDAARGASDIVLTEPGLSVIISAVLTSRAIFQRMKNYTIYAVSITIRIVFGFMLIALIWEFDFSAFMVLIIAILNDGTIMTISKDRVKPSPTPDSWKLKEIFATGVVLGGYQAIMTVIFFWAAHKTDFFSDTFGVRSIRDNNHELMGAVYLQVSIISQALIFVTRSRSWSFVERPGALLMIAFLIAQLIATLIAVYANWEFAKIRGIGWGWAGVIWLYSIVTYFPLDVFKFAIRYILSGKAWLNLFENKTAFTMKKDYGKEEREAQWALAQRTLHGLQPKEAVNIFPEKGSYRELSEIAEQAKRRAEIARLRELHTLKGHVESVVKLKGLDIETPSHYTV.

The residue at position 2 (Ser-2) is an N-acetylserine. Topologically, residues 2-61 are cytoplasmic; it reads SSLEDIKNETVDLEKIPIEEVFQQLKCSREGLTTQEGEDRIQIFGPNKLEEKKESKLLKF. Residues 62–81 form a helical membrane-spanning segment; it reads LGFMWNPLSWVMEMAAIMAI. At 82–93 the chain is on the extracellular side; that stretch reads ALANGDGRPPDW. A helical membrane pass occupies residues 94-114; it reads QDFVGIICLLVINSTISFIEE. At 115 to 243 the chain is on the cytoplasmic side; it reads NNAGNAAAAL…GHFQKVLTAI (129 aa). Residues 244–264 traverse the membrane as a helical segment; sequence GNFCICSIAIGMVIEIIVMYP. Residues 265–273 lie on the Extracellular side of the membrane; that stretch reads IQRRKYRDG. The helical transmembrane segment at 274-291 threads the bilayer; that stretch reads IDNLLVLLIGGIPIAMPT. Over 292–643 the chain is Cytoplasmic; that stretch reads VLSVTMAIGS…TSRAIFQRMK (352 aa). Asp-329 (4-aspartylphosphate intermediate) is an active-site residue. Asp-588 and Asp-592 together coordinate Mg(2+). Residues 644–665 traverse the membrane as a helical segment; sequence NYTIYAVSITIRIVFGFMLIAL. The Extracellular portion of the chain corresponds to 666–670; the sequence is IWEFD. The chain crosses the membrane as a helical span at residues 671–693; sequence FSAFMVLIIAILNDGTIMTISKD. At 694 to 709 the chain is on the cytoplasmic side; it reads RVKPSPTPDSWKLKEI. Residues 710-730 traverse the membrane as a helical segment; sequence FATGVVLGGYQAIMTVIFFWA. The Extracellular segment spans residues 731 to 751; that stretch reads AHKTDFFSDTFGVRSIRDNNH. Residues 752-772 traverse the membrane as a helical segment; it reads ELMGAVYLQVSIISQALIFVT. At 773–784 the chain is on the cytoplasmic side; the sequence is RSRSWSFVERPG. A helical transmembrane segment spans residues 785–805; the sequence is ALLMIAFLIAQLIATLIAVYA. Over 806-813 the chain is Extracellular; that stretch reads NWEFAKIR. The helical transmembrane segment at 814–834 threads the bilayer; the sequence is GIGWGWAGVIWLYSIVTYFPL. Residues 835–948 lie on the Cytoplasmic side of the membrane; sequence DVFKFAIRYI…DIETPSHYTV (114 aa). Thr-881 bears the Phosphothreonine mark. At Ser-899 the chain carries Phosphoserine. A Phosphoserine; by CIPK11 modification is found at Ser-931. An interaction with 14-3-3 proteins region spans residues 946-948; that stretch reads YTV. At Thr-947 the chain carries Phosphothreonine.

This sequence belongs to the cation transport ATPase (P-type) (TC 3.A.3) family. Type IIIA subfamily. Binds to 14-3-3 proteins. The binding is induced by phosphorylation of Thr-947 and it activates the H(+)-ATPase. Interacts (via the R-domain) with PSY1R (via C-terminus). Part of a functional complex containing PSKR1, BAK1, CNGC17, and AHA. Interacts with CNGC17 and PSKR1. Interacts with PP2C67/PP2C-D1 at the plasma membrane. Interacts with AHA1. Phosphorylated, probably by PHOT1 and PHOT2, at C-terminal Thr-947 in guard cells in response to blue light to induce stomatal opening. In terms of processing, phosphorylation at Thr-881 by PSY1R. This phosphorylation activates proton pumping. Decreased phosphorylation in response to flg22 elicitation. Post-translationally, phosphorylation at Ser-899 is specifically induced by RALF1, thus leading to the inhibition of proton transport. Increased phosphorylation in response to flg22 elicitation. Phosphorylation of Thr-947 induces the binding to 14-3-3 proteins, but phosphorylation of Ser-931 interferes with this binding no matter whether Thr-947 is phosphorylated or not. Decreased phosphorylation in response to flg22 elicitation. Phosphorylation of Thr-947 is enhanced by the presence of brassinolide (BL) via the BRI1-BIN2 pathway and prior the trigger of hypocotyl elongation. Inactivated by PP2C67/PP2C-D1-mediated Thr-947 dephosphorylation; SAUR19 inhibits the action of PP2C67/PP2C-D1 and thus promotes the active phosphorylated form. In terms of processing, abscisic acid induces dephosphorylation of AHA2 in etiolated seedlings, suppressing ATP hydrolysis and hypocotyl elongation. Higher levels in roots than in shoots. Expressed in epidermal and root cortex cells, in phloem, xylem and root hairs. Detected in cotyledons, leaves, hypocotyls, roots and root hairs. Expressed in guard cells and mesophyll cells.

It is found in the cell membrane. The enzyme catalyses ATP + H2O + H(+)(in) = ADP + phosphate + 2 H(+)(out). With respect to regulation, regulated by an auto-inhibitory C-terminal domain that can be displaced by phosphorylation of Thr-947 and the subsequent binding of 14-3-3 proteins. Negatively regulated by PKS5. PKS5 phosphorylates Ser-931, inhibiting interaction with the activating 14-3-3 protein. Positively regulated by PSY1R. PSY1R phosphorylates Thr-881, situated in the auto-inhibitory region I of the C-terminal domain, causing pump activation. Negatively regulated by the secreted peptide RALF. After specific binding to FERONIA, RALF causes phosphorylation at Ser-899, mediating the inhibition of proton transport. Activated by lysophospholipids, without the involvement of phosphorylation of Thr-947. This activation is critically dependent on the single autoinhibitory residue Leu-919. Repressed by PP2C-D phosphatases (e.g. PP2C67/PP2C-D1 and PP2C64/PP2C-D5) which dephosphorylates Thr-947. Triggered by SAUR19 via phosphorylation of the C-terminal autoinhibitory domain (e.g. Thr-947), as a result of the inhibition of PP2C67/PP2C-D1. Phosphorylation on Thr residues is repressed by tyrphostin 9, sphingosine, GW5074 and BML-265. By contrast, the fungal phytotoxin fusicoccin (FC) promotes phosphorylation of Thr-947 independently to BHP, thus leading to large stomatal opening. Its function is as follows. The plasma membrane H(+) ATPase of plants and fungi generates a proton gradient that drives the active transport of nutrients by H(+)-symport. The resulting external acidification and/or internal alkinization may mediate growth responses. Involved in maintaining the membrane potential and delta-pH, together forming the plasma membrane protonmotive force (PMF) required for root and hypocotyl elongation and root tropism. Important for root growth and development during different nitrogen regimes. Forms a functional cation-translocating unit with CNGC17 that is activated by PSKR1/BAK1 and possibly other BAK1/RLK complexes. Promotes stomatal opening in response to blue light. The protein is ATPase 2, plasma membrane-type of Arabidopsis thaliana (Mouse-ear cress).